The chain runs to 34 residues: Photosystem II reaction center protein M (34 aa).

A helical membrane pass occupies residues 7–27; it reads GFLATLLFVAVPMLFLIGLYI.

This sequence belongs to the PsbM family. In terms of assembly, PSII is composed of 1 copy each of membrane proteins PsbA, PsbB, PsbC, PsbD, PsbE, PsbF, PsbH, PsbI, PsbJ, PsbK, PsbL, PsbM, PsbT, PsbX, PsbY, Psb30/Ycf12, peripheral proteins PsbO, CyanoQ (PsbQ), PsbU, PsbV and a large number of cofactors. It forms dimeric complexes.

The protein resides in the cellular thylakoid membrane. One of the components of the core complex of photosystem II (PSII). PSII is a light-driven water:plastoquinone oxidoreductase that uses light energy to abstract electrons from H(2)O, generating O(2) and a proton gradient subsequently used for ATP formation. It consists of a core antenna complex that captures photons, and an electron transfer chain that converts photonic excitation into a charge separation. This subunit is found at the monomer-monomer interface. In Prochlorococcus marinus (strain MIT 9303), this protein is Photosystem II reaction center protein M.